Reading from the N-terminus, the 179-residue chain is ATP synthase subunit delta (179 aa).

It belongs to the ATPase delta chain family. F-type ATPases have 2 components, F(1) - the catalytic core - and F(0) - the membrane proton channel. F(1) has five subunits: alpha(3), beta(3), gamma(1), delta(1), epsilon(1). F(0) has three main subunits: a(1), b(2) and c(10-14). The alpha and beta chains form an alternating ring which encloses part of the gamma chain. F(1) is attached to F(0) by a central stalk formed by the gamma and epsilon chains, while a peripheral stalk is formed by the delta and b chains.

The protein resides in the cell inner membrane. Its function is as follows. F(1)F(0) ATP synthase produces ATP from ADP in the presence of a proton or sodium gradient. F-type ATPases consist of two structural domains, F(1) containing the extramembraneous catalytic core and F(0) containing the membrane proton channel, linked together by a central stalk and a peripheral stalk. During catalysis, ATP synthesis in the catalytic domain of F(1) is coupled via a rotary mechanism of the central stalk subunits to proton translocation. This protein is part of the stalk that links CF(0) to CF(1). It either transmits conformational changes from CF(0) to CF(1) or is implicated in proton conduction. This chain is ATP synthase subunit delta, found in Burkholderia ambifaria (strain ATCC BAA-244 / DSM 16087 / CCUG 44356 / LMG 19182 / AMMD) (Burkholderia cepacia (strain AMMD)).